Reading from the N-terminus, the 124-residue chain is Multifunctional methyltransferase subunit TRM112 homolog A (124 aa).

The 119-residue stretch at 2-120 (RLITHNMLSC…NKGIPNMLLH (119 aa)) folds into the TRM112 domain.

Belongs to the TRM112 family. In terms of assembly, interacts with TRM9.

Acts as an activator of both rRNA/tRNA and protein methyltransferases. Required for TRM9 tRNA methyltransferase activity. Involved in the regulation of cell division progression during organ growth. Required for the expression of cell cycle-related genes, and the G2-M phase progression during organogenesis. The chain is Multifunctional methyltransferase subunit TRM112 homolog A from Arabidopsis thaliana (Mouse-ear cress).